Consider the following 308-residue polypeptide: ATP synthase gamma chain (308 aa).

It belongs to the ATPase gamma chain family. F-type ATPases have 2 components, CF(1) - the catalytic core - and CF(0) - the membrane proton channel. CF(1) has five subunits: alpha(3), beta(3), gamma(1), delta(1), epsilon(1). CF(0) has three main subunits: a, b and c.

The protein localises to the cell inner membrane. Its function is as follows. Produces ATP from ADP in the presence of a proton gradient across the membrane. The gamma chain is believed to be important in regulating ATPase activity and the flow of protons through the CF(0) complex. In Salinibacter ruber (strain DSM 13855 / M31), this protein is ATP synthase gamma chain.